We begin with the raw amino-acid sequence, 414 residues long: MSGIIATYLIHDDSHNLEKKAEQIALGLTIGSWTHLPHLLQEQLKQHKGNVLHVEELAEHEHTNSYLRKKVKRGIIKIEYPLLNFSPDLPAILTTTFGKLSLDGEVKLIDLTFSDELKKHFPGPKFGIDGIRNLLQVHDRPLLMSIFKGMIGRNIGYLKTQLRDQAIGGVDIVKDDEILFENALTPLTKRIVSGKEVLQSVYETYGHKTLYAVNVTGRTFDLKENAKRAVQAGADILLFNVFAYGLDVLQSLAEDDEIPVPIMAHPAVSGAYSASKLYGISSPLLLGKLLRYAGADFSLFPSPYGSVALEKEEALAISKYLTEDDVFFKKSFSVPSAGIHPGFVPFIIRDFGKDVVINAGGGIHGHPNGAQGGGKAFRTAIDATLQNKPLHEVDDINLHSALQIWGNPSHEVKL.

Catalysis depends on Lys-99, which acts as the Proton acceptor. Residues Lys-148, 174–177 (KDDE), His-265, Gly-338, and 360–361 (GG) each bind substrate. Residues Lys-174, Asp-176, and Glu-177 each coordinate Mg(2+). Lys-174 carries the post-translational modification N6-carboxylysine.

The protein belongs to the RuBisCO large chain family. Type IV subfamily. As to quaternary structure, homodimer. The cofactor is Mg(2+).

The enzyme catalyses 5-methylsulfanyl-2,3-dioxopentyl phosphate = 2-hydroxy-5-methylsulfanyl-3-oxopent-1-enyl phosphate. It participates in amino-acid biosynthesis; L-methionine biosynthesis via salvage pathway; L-methionine from S-methyl-5-thio-alpha-D-ribose 1-phosphate: step 3/6. In terms of biological role, catalyzes the enolization of 2,3-diketo-5-methylthiopentyl-1-phosphate (DK-MTP-1-P) into 2-hydroxy-3-keto-5-methylthiopentenyl-1-phosphate (HK-MTPenyl-1-P). In Bacillus cereus (strain AH820), this protein is 2,3-diketo-5-methylthiopentyl-1-phosphate enolase.